A 140-amino-acid polypeptide reads, in one-letter code: Regulator of ribonuclease activity B (140 aa).

The segment at 115–140 (FEDPNAQDDDEDDGEAIDEDDNGIRH) is disordered. Residues 119–140 (NAQDDDEDDGEAIDEDDNGIRH) are compositionally biased toward acidic residues.

The protein belongs to the RraB family. As to quaternary structure, interacts with the C-terminal region of Rne.

Its subcellular location is the cytoplasm. Its function is as follows. Globally modulates RNA abundance by binding to RNase E (Rne) and regulating its endonucleolytic activity. Can modulate Rne action in a substrate-dependent manner by altering the composition of the degradosome. This is Regulator of ribonuclease activity B from Pantoea ananatis (strain LMG 20103).